We begin with the raw amino-acid sequence, 151 residues long: Protein SprT-like (151 aa).

The SprT-like domain occupies 6–148 (LQALVERISL…FCRGKLKKIK (143 aa)). H67 contributes to the Zn(2+) binding site. E68 is an active-site residue. Position 71 (H71) interacts with Zn(2+).

Belongs to the SprT family. It depends on Zn(2+) as a cofactor.

It is found in the cytoplasm. This is Protein SprT-like from Anoxybacillus flavithermus (strain DSM 21510 / WK1).